Reading from the N-terminus, the 297-residue chain is Bifunctional protein FolD 2 (297 aa).

NADP(+)-binding positions include 173–175, serine 198, and isoleucine 239; that span reads GKS.

It belongs to the tetrahydrofolate dehydrogenase/cyclohydrolase family. In terms of assembly, homodimer.

It catalyses the reaction (6R)-5,10-methylene-5,6,7,8-tetrahydrofolate + NADP(+) = (6R)-5,10-methenyltetrahydrofolate + NADPH. The enzyme catalyses (6R)-5,10-methenyltetrahydrofolate + H2O = (6R)-10-formyltetrahydrofolate + H(+). It participates in one-carbon metabolism; tetrahydrofolate interconversion. Catalyzes the oxidation of 5,10-methylenetetrahydrofolate to 5,10-methenyltetrahydrofolate and then the hydrolysis of 5,10-methenyltetrahydrofolate to 10-formyltetrahydrofolate. The sequence is that of Bifunctional protein FolD 2 from Sinorhizobium medicae (strain WSM419) (Ensifer medicae).